The sequence spans 192 residues: Transmembrane protein 276 (192 aa).

A signal peptide spans 1-32 (MAPKPGAEWSTALSHLVLGVVSLHAAVSTAEA). The next 4 membrane-spanning stretches (helical) occupy residues 35–55 (GAAA…APGL), 63–83 (AGAW…FHWV), 89–109 (SANL…HLGP), and 114–134 (VAGQ…AVFT).

Its subcellular location is the membrane. The protein is Transmembrane protein 276 of Homo sapiens (Human).